The primary structure comprises 1212 residues: Probable serine/threonine-protein kinase DDB_G0284491 (1212 aa).

Residues 197 to 217 (LFHSFSLLNLYVYLIIVIRII) form a helical membrane-spanning segment. Residues asparagine 229, asparagine 299, asparagine 309, asparagine 328, asparagine 335, asparagine 341, asparagine 344, asparagine 391, asparagine 419, asparagine 422, asparagine 426, asparagine 427, asparagine 435, and asparagine 499 are each glycosylated (N-linked (GlcNAc...) asparagine). The tract at residues 288-329 (LNNNNDNNLNNNNSNNNLNNNNNSNSNFNNDNNLNSNINSND) is disordered. Disordered stretches follow at residues 412–439 (GNSN…NSGG) and 489–517 (IIKN…DYEE). Over residues 489–507 (IIKNNNNNNNNNSNNNNNN) the composition is skewed to low complexity. A compositionally biased stretch (acidic residues) spans 508–517 (NDEDDSDYEE). The chain crosses the membrane as a helical span at residues 673 to 693 (IQIFDDYSLIIALRLLMNFIL). Residues 703-720 (VPPPPTQPSSRPQSPPTV) show a composition bias toward pro residues. 2 disordered regions span residues 703–733 (VPPP…HHSG) and 751–813 (EVVS…NNNN). The 318-residue stretch at 865–1182 (ETEIEPFASG…EVYNDLQDIY (318 aa)) folds into the Protein kinase domain. ATP is bound by residues 871 to 879 (FASGGQANI) and lysine 924. Catalysis depends on aspartate 1035, which acts as the Proton acceptor.

The protein belongs to the protein kinase superfamily. Ser/Thr protein kinase family.

Its subcellular location is the membrane. The catalysed reaction is L-seryl-[protein] + ATP = O-phospho-L-seryl-[protein] + ADP + H(+). It carries out the reaction L-threonyl-[protein] + ATP = O-phospho-L-threonyl-[protein] + ADP + H(+). The protein is Probable serine/threonine-protein kinase DDB_G0284491 of Dictyostelium discoideum (Social amoeba).